A 425-amino-acid chain; its full sequence is TRAF family member-associated NF-kappa-B activator (425 aa).

Methionine 1 bears the N-acetylmethionine mark. A necessary for interaction with ZC3H12A region spans residues 1-31 (MDKNIGEQLNKAYEAFRQACMDRDSAVKELQ). The stretch at 22–62 (DRDSAVKELQQKTENYEQRIREQQEQLSLQQTIIDKLKSQL) forms a coiled coil. The interval 70–191 (DNNYGCVPLL…QCTDKTDKQE (122 aa)) is necessary for interaction with TRAF6. Serine 126 and serine 129 each carry phosphoserine. The interval 133 to 172 (HERGNIEKTFWDLKEEFHKICMLAKAQKDHLSKLNIPDTA) is interaction with TBK1 and IKBKE. A TRAF family member interaction region spans residues 172–191 (ATETQCSVPIQCTDKTDKQE). 2 positions are modified to phosphoserine: serine 178 and serine 208. The residue at position 213 (threonine 213) is a Phosphothreonine. Serine 225, serine 228, serine 341, serine 354, and serine 357 each carry phosphoserine. A UBZ1-type zinc finger spans residues 393-420 (PRVCEFCQAVFPPSITSRGDFLRHLNSH). Zn(2+)-binding residues include cysteine 396, cysteine 399, histidine 416, and histidine 420.

As to quaternary structure, homodimer. Found in a deubiquitination complex with TANK, USP10 and ZC3H12A; this complex inhibits genotoxic stress- or interleukin-1-beta-mediated NF-kappaB activation by promoting IKBKG or TRAF6 deubiquitination. Interacts with IKBKG; this interaction increases in response to DNA damage. Interacts with TRAF6; this interaction increases in response to DNA damage and recruits USP10 to the ubiquitinated TRAF6. Interacts with USP10; this interaction increases in response to DNA damage. Interacts with ZC3H12A; this interaction increases in response to DNA damage. Interacts with TBK1. Interacts with IKBKE. Also interacts with TRAF1, TRAF2, and TRAF3 by binding to their TRAF-C domains; the interaction with TRAF2 is disrupted by the phosphorylation of TANK by IKBKE. Interacts more strongly with TRAF1 and TRAF2 than TRAF3. Interacts with IKBKG; the interaction is enhanced by IKBKE and TBK1. Part of a ternary complex consisting of TANK, IKBKB and IKBKG. In terms of assembly, (Microbial infection) Interacts with vaccinia virus protein C6. (Microbial infection) Interacts with Seneca Valley virus protease 3C; this interaction allows the cleavage of TANK and subsequent suppression of host innate immunity. In terms of processing, phosphorylated by IKBKE. (Microbial infection) Cleaved by encephalomyocarditis virus (EMCV) protease 3C. This cleavage allows the virus to disrupt the TANK-TBK1-IKKepsilon-IRF3 complex, thereby inhibiting the induction of the IFN-beta signal pathway. Post-translationally, (Microbial infection) Cleaved by Seneca Valley virus protease 3C allowing the virus to suppress interferon type-I through both RIG-I and Toll-like receptor-dependent pathways. In terms of tissue distribution, ubiquitous.

It localises to the cytoplasm. In terms of biological role, adapter protein involved in I-kappa-B-kinase (IKK) regulation which constitutively binds TBK1 and IKBKE playing a role in antiviral innate immunity. Acts as a regulator of TRAF function by maintaining them in a latent state. Blocks TRAF2 binding to LMP1 and inhibits LMP1-mediated NF-kappa-B activation. Negatively regulates NF-kappaB signaling and cell survival upon DNA damage. Plays a role as an adapter to assemble ZC3H12A, USP10 in a deubiquitination complex which plays a negative feedback response to attenuate NF-kappaB activation through the deubiquitination of IKBKG or TRAF6 in response to interleukin-1-beta (IL1B) stimulation or upon DNA damage. Promotes UBP10-induced deubiquitination of TRAF6 in response to DNA damage. May control negatively TRAF2-mediated NF-kappa-B activation signaled by CD40, TNFR1 and TNFR2. The sequence is that of TRAF family member-associated NF-kappa-B activator (TANK) from Homo sapiens (Human).